A 621-amino-acid chain; its full sequence is Bifunctional 3'-phosphoadenosine 5'-phosphosulfate synthase 2 (621 aa).

An adenylyl-sulfate kinase region spans residues 1 to 216; it reads MSANFKMNHK…VVELLQEQNI (216 aa). 53 to 58 serves as a coordination point for ATP; that stretch reads GAGKTT. Adenosine 5'-phosphosulfate is bound by residues 80-83, Phe-92, 97-100, 123-124, Lys-162, and 175-176; these read DNVR, REEN, IS, and GF. ATP contacts are provided by residues Ser-198, 415 to 418, 517 to 521, and Ala-559; these read QLRN and GRDPA. Residues 225 to 621 form a sulfate adenylyltransferase region; sequence IHELFVPENK…DYYRSLEKTN (397 aa).

In the N-terminal section; belongs to the APS kinase family. It in the C-terminal section; belongs to the sulfate adenylyltransferase family. In terms of tissue distribution, expressed in liver, cartilage, skin and brain.

The catalysed reaction is sulfate + ATP + H(+) = adenosine 5'-phosphosulfate + diphosphate. It catalyses the reaction adenosine 5'-phosphosulfate + ATP = 3'-phosphoadenylyl sulfate + ADP + H(+). It functions in the pathway sulfur metabolism; sulfate assimilation. In terms of biological role, bifunctional enzyme with both ATP sulfurylase and APS kinase activity, which mediates two steps in the sulfate activation pathway. The first step is the transfer of a sulfate group to ATP to yield adenosine 5'-phosphosulfate (APS), and the second step is the transfer of a phosphate group from ATP to APS yielding 3'-phosphoadenylylsulfate/PAPS, the activated sulfate donor used by sulfotransferases. In mammals, PAPS is the sole source of sulfate while APS appears to only be an intermediate in the sulfate-activation pathway. May have an important role in skeletogenesis during postnatal growth. The protein is Bifunctional 3'-phosphoadenosine 5'-phosphosulfate synthase 2 (Papss2) of Mus musculus (Mouse).